A 157-amino-acid polypeptide reads, in one-letter code: Putative glutathione-dependent formaldehyde-activating enzyme (157 aa).

One can recognise a CENP-V/GFA domain in the interval 3–134 (LEGSCHCGAV…WVEIESREQD (132 aa)). Residues Cys7, Cys9, Cys27, Cys29, Cys32, Cys79, and Cys82 each coordinate Zn(2+).

Belongs to the Gfa family. The cofactor is Zn(2+).

The enzyme catalyses S-(hydroxymethyl)glutathione = glutathione + formaldehyde. Its pathway is one-carbon metabolism; formaldehyde degradation; formate from formaldehyde (glutathione route): step 1/3. Functionally, catalyzes the condensation of formaldehyde and glutathione to S-hydroxymethylglutathione. The sequence is that of Putative glutathione-dependent formaldehyde-activating enzyme from Halomonas elongata (strain ATCC 33173 / DSM 2581 / NBRC 15536 / NCIMB 2198 / 1H9).